Reading from the N-terminus, the 574-residue chain is Sulfate adenylyltransferase (574 aa).

The N-terminal stretch occupies residues 1-169; it reads MANTPHGGVL…LEAVNKLNHY (169 aa). The tract at residues 170–394 is catalytic; that stretch reads DYVGLRYTPA…LRESSPPRAL (225 aa). Gln-197 is a binding site for sulfate. ATP is bound by residues 197–200 and 291–294; these read QTRN and GRDH. Catalysis depends on residues Thr-198, Arg-199, and Asn-200. Residue Arg-199 participates in sulfate binding. Ala-295 serves as a coordination point for sulfate. Val-333 is a binding site for ATP. Residues 395-574 form an allosteric regulation domain; adenylyl-sulfate kinase-like region; that stretch reads QGFTIFLTGY…LESEGYFERL (180 aa). 3'-phosphoadenylyl sulfate contacts are provided by residues 434–437, Arg-451, 477–478, and Arg-516; these read DTVR and IA.

In the N-terminal section; belongs to the sulfate adenylyltransferase family. The protein in the C-terminal section; belongs to the APS kinase family. Homohexamer. Dimer of trimers.

It localises to the cytoplasm. It catalyses the reaction sulfate + ATP + H(+) = adenosine 5'-phosphosulfate + diphosphate. Its pathway is sulfur metabolism; hydrogen sulfide biosynthesis; sulfite from sulfate: step 1/3. Allosterically inhibited by 3'-phosphoadenosine 5'-phosphosulfate (PAPS). Its function is as follows. Catalyzes the first intracellular reaction of sulfate assimilation, forming adenosine-5'-phosphosulfate (APS) from inorganic sulfate and ATP. Plays an important role in sulfate activation as a component of the biosynthesis pathway of sulfur-containing amino acids. This is Sulfate adenylyltransferase from Emericella nidulans (strain FGSC A4 / ATCC 38163 / CBS 112.46 / NRRL 194 / M139) (Aspergillus nidulans).